Consider the following 585-residue polypeptide: Lipoprotein LpqB (585 aa).

The first 18 residues, 1–18 (MKRLLTVLVVGLVALVSG), serve as a signal peptide directing secretion. Cysteine 19 carries N-palmitoyl cysteine lipidation. Residue cysteine 19 is the site of S-diacylglycerol cysteine attachment. Positions 24 to 46 (SSSSPQAIGTVERPAPPSLPKPT) are disordered. Residues 37-46 (PAPPSLPKPT) show a composition bias toward pro residues.

The protein belongs to the LpqB lipoprotein family. As to quaternary structure, interacts with MtrB, probably extracytoplasmically via its sensor domain.

The protein localises to the cell membrane. It is found in the secreted. Its subcellular location is the cell wall. Functionally, may modulate activity of the MtrAB system in controlling homeostasis of the cell wall and cell division. The sequence is that of Lipoprotein LpqB from Mycolicibacterium smegmatis (strain ATCC 700084 / mc(2)155) (Mycobacterium smegmatis).